A 614-amino-acid polypeptide reads, in one-letter code: Glucosidase 2 subunit beta (614 aa).

The first 20 residues, Met-1–Ala-20, serve as a signal peptide directing secretion. Residue Asn-115 is glycosylated (N-linked (GlcNAc...) asparagine). 3 stretches are compositionally biased toward basic and acidic residues: residues Glu-194 to Ser-222, Gln-231 to Glu-272, and Thr-324 to Glu-351. Residues Glu-194–Asp-396 form a disordered region. Acidic residues predominate over residues Thr-352–Glu-364. Residues Ser-372–Asp-382 show a composition bias toward basic and acidic residues. The segment covering Asp-383 to Asp-396 has biased composition (acidic residues). The 96-residue stretch at Asp-497 to Glu-592 folds into the MRH domain. Intrachain disulfides connect Cys-499-Cys-512, Cys-549-Cys-578, and Cys-563-Cys-590.

Heterodimer of a catalytic alpha subunit and a beta subunit.

The protein resides in the endoplasmic reticulum. It functions in the pathway glycan metabolism; N-glycan metabolism. Regulatory subunit of glucosidase II. May be required for defense response elicited by pathogen-associated molecular patterns (PAMPs). The protein is Glucosidase 2 subunit beta of Oryza sativa subsp. indica (Rice).